Here is a 314-residue protein sequence, read N- to C-terminus: Phospho-N-acetylmuramoyl-pentapeptide-transferase (314 aa).

The next 10 helical transmembrane spans lie at 4–24 (LIFY…PIFI), 52–72 (TMGG…TYFI), 77–97 (LFLI…LDDY), 111–131 (IQKL…ISIF), 146–166 (LDLK…MSNA), 169–189 (LTDG…LFTA), 191–211 (IAGI…AYLF), 219–239 (IFMG…LALY), 242–262 (VELF…SVII), and 294–314 (IVLI…GGVL).

The protein belongs to the glycosyltransferase 4 family. MraY subfamily. Mg(2+) is required as a cofactor.

It localises to the cell inner membrane. The catalysed reaction is UDP-N-acetyl-alpha-D-muramoyl-L-alanyl-gamma-D-glutamyl-meso-2,6-diaminopimeloyl-D-alanyl-D-alanine + di-trans,octa-cis-undecaprenyl phosphate = di-trans,octa-cis-undecaprenyl diphospho-N-acetyl-alpha-D-muramoyl-L-alanyl-D-glutamyl-meso-2,6-diaminopimeloyl-D-alanyl-D-alanine + UMP. It participates in cell wall biogenesis; peptidoglycan biosynthesis. Catalyzes the initial step of the lipid cycle reactions in the biosynthesis of the cell wall peptidoglycan: transfers peptidoglycan precursor phospho-MurNAc-pentapeptide from UDP-MurNAc-pentapeptide onto the lipid carrier undecaprenyl phosphate, yielding undecaprenyl-pyrophosphoryl-MurNAc-pentapeptide, known as lipid I. This Petrotoga mobilis (strain DSM 10674 / SJ95) protein is Phospho-N-acetylmuramoyl-pentapeptide-transferase.